Consider the following 166-residue polypeptide: Ribosome maturation factor RimM (166 aa).

The PRC barrel domain occupies 94–166 (EDEFYITDLN…AILNYKRDEL (73 aa)).

It belongs to the RimM family. In terms of assembly, binds ribosomal protein uS19.

It is found in the cytoplasm. Functionally, an accessory protein needed during the final step in the assembly of 30S ribosomal subunit, possibly for assembly of the head region. Essential for efficient processing of 16S rRNA. May be needed both before and after RbfA during the maturation of 16S rRNA. It has affinity for free ribosomal 30S subunits but not for 70S ribosomes. This is Ribosome maturation factor RimM from Rickettsia bellii (strain RML369-C).